The primary structure comprises 423 residues: Ankyrin repeat and SAM domain-containing protein 4B (423 aa).

The mediates localization to microvilli stretch occupies residues 1–251 (MSTRYHQAAS…PKDFKEKLHF (251 aa)). 3 ANK repeats span residues 31–60 (DGMTPTLLAAYHGNLEALEIICSRGGDPDK), 64–93 (WGNTPLHYAASNGHTHCISFLVNFGANIFA), and 97–126 (DLKSPLDAAASREQKECVALLDKAATVQNT). Residues 130 to 169 (KRVTRLKEQALKNARKQMKECERLQERHQNKMARTYSKED) are a coiled coil. Disordered regions lie at residues 158-181 (QNKMARTYSKEDSGTISSSHSTLS), 207-227 (KSKKNKDTTEQLEKDGRSGQR), and 303-335 (QRQGAAGTVEEEEEEEEEEEEEKREANGTAGDL). Low complexity predominate over residues 171-181 (GTISSSHSTLS). Over residues 207-224 (KSKKNKDTTEQLEKDGRS) the composition is skewed to basic and acidic residues. Residues 253-352 (VEEDDDVQHE…EWEEDAVDAT (100 aa)) are mediates interaction with MYO7B. Positions 301 to 335 (LFQRQGAAGTVEEEEEEEEEEEEEKREANGTAGDL) form a coiled coil. Residues 311–324 (VEEEEEEEEEEEEE) show a composition bias toward acidic residues. The SAM domain maps to 357–409 (FLQSQHLEEFLPIFMREQIDLEALLLCSDEDLQNIHMQLGPRKKVLSAIDKRK). The short motif at 421-423 (TSL) is the PDZ-binding; mediates interaction with USH1C element.

As to quaternary structure, part of the IMAC/intermicrovillar adhesion complex/intermicrovillar tip-link complex composed of ANKS4B, MYO7B, USH1C, CDHR2 and CDHR5. Interacts with USH1C; the interaction is direct and is required for ANKS4B localization to the tip of microvilli. Interacts with MYO7B; the interaction is direct. May interact with HSPA5. As to expression, cochlea, kidney, lung, liver, pancreas, salivary gland and small intestine (at protein level). Expressed in kidney, small intestine, pancreas, liver and colon. Not detected in heart, spleen and brain.

It is found in the cell projection. The protein localises to the microvillus. As part of the intermicrovillar adhesion complex/IMAC plays a role in epithelial brush border differentiation, controlling microvilli organization and length. Plays a role in assembly of the complex. May play a role in cellular response to endoplasmic reticulum stress. This Mus musculus (Mouse) protein is Ankyrin repeat and SAM domain-containing protein 4B.